The chain runs to 66 residues: Gallinacin-5 (66 aa).

An N-terminal signal peptide occupies residues Met-1 to Pro-19. Residues Gly-20–Arg-25 constitute a propeptide that is removed on maturation. 3 disulfide bridges follow: Cys-31–Cys-59, Cys-38–Cys-53, and Cys-43–Cys-60.

Belongs to the beta-defensin family. Strong expression in the tongue and bone marrow. Low expression in the esophagus, trachea, lung, brain and ovary. Expressed in the ovarian stroma, but not in the ovarian follicles.

It is found in the secreted. Its subcellular location is the cytoplasmic granule. In terms of biological role, has bactericidal activity. The sequence is that of Gallinacin-5 (GAL5) from Gallus gallus (Chicken).